Reading from the N-terminus, the 725-residue chain is IML2-like protein YKR018C (725 aa).

The residue at position 196 (threonine 196) is a Phosphothreonine. Residues serine 246, serine 377, and serine 380 each carry the phosphoserine modification.

This sequence belongs to the IML2 family.

The protein resides in the cytoplasm. Its subcellular location is the nucleus. This is IML2-like protein YKR018C from Saccharomyces cerevisiae (strain ATCC 204508 / S288c) (Baker's yeast).